Consider the following 123-residue polypeptide: Ribulose bisphosphate carboxylase small subunit, chloroplastic 1 (123 aa).

At Met1 the chain carries Methionine derivative.

It belongs to the RuBisCO small chain family. In terms of assembly, heterohexadecamer of 8 large and 8 small subunits.

Its subcellular location is the plastid. It localises to the chloroplast. Its function is as follows. RuBisCO catalyzes two reactions: the carboxylation of D-ribulose 1,5-bisphosphate, the primary event in carbon dioxide fixation, as well as the oxidative fragmentation of the pentose substrate. Both reactions occur simultaneously and in competition at the same active site. Although the small subunit is not catalytic it is essential for maximal activity. This Spinacia oleracea (Spinach) protein is Ribulose bisphosphate carboxylase small subunit, chloroplastic 1.